The sequence spans 1846 residues: Brefeldin A-inhibited guanine nucleotide-exchange protein 1 (1846 aa).

The segment at 2-224 (YEGKKTKNMF…QEAKQMERER (223 aa)) is DCB; DCB:DCB domain and DCB:HUS domain interaction. Residue serine 52 is modified to Phosphoserine. Disordered regions lie at residues 217 to 248 (AKQM…HLRY), 264 to 302 (DLDP…DQAT), and 347 to 410 (VSAS…SPGA). A compositionally biased stretch (basic and acidic residues) spans 267–277 (PQTHDVDKSLQ). Phosphoserine is present on residues serine 286, serine 289, serine 290, serine 394, and serine 407. The segment covering 391–406 (SVSSNDTQESGNSSGP) has biased composition (polar residues). The segment at 554–574 (ADAQSVVDIYVNYDCDLNAAN) is HUS; DCB:HUS domain interaction. The segment at 631 to 684 (PNSQTTLGQEKPSEQEISEIKHPETINRYGSLNSLESTSSSGIGSYSTQMSGTD) is disordered. A compositionally biased stretch (basic and acidic residues) spans 641–655 (KPSEQEISEIKHPET). Residues 661 to 681 (SLNSLESTSSSGIGSYSTQMS) show a composition bias toward low complexity. Residues 688–877 (QFEVLKQQKE…SAIYNEIAGK (190 aa)) enclose the SEC7 domain. A Nuclear localization signal (NLS) motif is present at residues 708-712 (KKPKR). 3 positions are modified to phosphoserine: serine 1076, serine 1563, and serine 1566. Residues 1571 to 1600 (DSAQPRSSDNRQQAPLVSVSPASEEVSKGR) are disordered. Over residues 1574–1585 (QPRSSDNRQQAP) the composition is skewed to polar residues.

Homodimer. Interacts with ARFGEF2/BIG2; both proteins are probably part of the same or very similar macromolecular complexes. Interacts with FKBP2. Interacts with MYO9B. Interacts with PRKAR1A and PRKAR2A. Interacts with PPP1CC. Interacts with NCL, FBL, NUP62 and U3 small nucleolar RNA. Interacts with DPY30. Interacts with PDE3A. Interacts with KANK1. Interacts with TBC1D22A and TBC1D22B. Phosphorylated. In vitro phosphorylated by PKA reducing its GEF activity and dephosphorylated by phosphatase PP1.

It localises to the cytoplasm. Its subcellular location is the perinuclear region. The protein localises to the golgi apparatus. It is found in the trans-Golgi network. The protein resides in the nucleus. It localises to the nucleolus. Its subcellular location is the nucleus matrix. The protein localises to the membrane. With respect to regulation, inhibited by brefeldin A. In terms of biological role, promotes guanine-nucleotide exchange on ARF1 and ARF3. Promotes the activation of ARF1/ARF3 through replacement of GDP with GTP. Involved in vesicular trafficking. Required for the maintenance of Golgi structure; the function may be independent of its GEF activity. Required for the maturation of integrin beta-1 in the Golgi. Involved in the establishment and persistence of cell polarity during directed cell movement in wound healing. Proposed to act as A kinase-anchoring protein (AKAP) and may mediate crosstalk between Arf and PKA pathways. Inhibits GAP activity of MYO9B probably through competitive RhoA binding. The function in the nucleus remains to be determined. The chain is Brefeldin A-inhibited guanine nucleotide-exchange protein 1 (Arfgef1) from Rattus norvegicus (Rat).